Here is a 110-residue protein sequence, read N- to C-terminus: Large ribosomal subunit protein uL22 (110 aa).

Belongs to the universal ribosomal protein uL22 family. Part of the 50S ribosomal subunit.

In terms of biological role, this protein binds specifically to 23S rRNA; its binding is stimulated by other ribosomal proteins, e.g. L4, L17, and L20. It is important during the early stages of 50S assembly. It makes multiple contacts with different domains of the 23S rRNA in the assembled 50S subunit and ribosome. The globular domain of the protein is located near the polypeptide exit tunnel on the outside of the subunit, while an extended beta-hairpin is found that lines the wall of the exit tunnel in the center of the 70S ribosome. This Geobacter metallireducens (strain ATCC 53774 / DSM 7210 / GS-15) protein is Large ribosomal subunit protein uL22.